The sequence spans 452 residues: Probable E3 ubiquitin-protein ligase ARI15 (452 aa).

A TRIAD supradomain region spans residues 22–256 (SRVYCGICSN…GTSGSCLAPA (235 aa)). C26, C29, C54, H56, C59, C62, C83, C88, C128, C133, C154, C156, C161, C164, H169, C174, C208, C211, C229, C231, C236, C239, H246, and C252 together coordinate Zn(2+). An RING-type 1 zinc finger spans residues 26–88 (CGICSNIGDD…TAISCPDRDC (63 aa)). An IBR-type zinc finger spans residues 106 to 174 (AMYELYILKS…MLESHRPVTC (69 aa)). The segment at 208-239 (CPHCFIPVEIDGERPWAQFLTCVCSGRFCWKC) adopts an RING-type 2; atypical zinc-finger fold. A RanBP2-type zinc finger spans residues 414–445 (NYGGPYWLCDRCTYGNSWFQRACKMCCDPTAS).

The protein belongs to the RBR family. Ariadne subfamily. The cofactor is Zn(2+). In terms of tissue distribution, ubiquitous.

The catalysed reaction is [E2 ubiquitin-conjugating enzyme]-S-ubiquitinyl-L-cysteine + [acceptor protein]-L-lysine = [E2 ubiquitin-conjugating enzyme]-L-cysteine + [acceptor protein]-N(6)-ubiquitinyl-L-lysine.. It functions in the pathway protein modification; protein ubiquitination. Functionally, might act as an E3 ubiquitin-protein ligase, or as part of E3 complex, which accepts ubiquitin from specific E2 ubiquitin-conjugating enzymes and then transfers it to substrates. The protein is Probable E3 ubiquitin-protein ligase ARI15 (ARI15) of Arabidopsis thaliana (Mouse-ear cress).